Here is a 564-residue protein sequence, read N- to C-terminus: Phenylalanine--tRNA ligase beta subunit (564 aa).

The region spanning 286–362 (YFQNSLKINV…IGKGLDNFKS (77 aa)) is the B5 domain. Aspartate 340, aspartate 346, glutamate 349, and glutamate 350 together coordinate Mg(2+).

Belongs to the phenylalanyl-tRNA synthetase beta subunit family. Type 2 subfamily. In terms of assembly, tetramer of two alpha and two beta subunits. It depends on Mg(2+) as a cofactor.

The protein localises to the cytoplasm. It catalyses the reaction tRNA(Phe) + L-phenylalanine + ATP = L-phenylalanyl-tRNA(Phe) + AMP + diphosphate + H(+). The chain is Phenylalanine--tRNA ligase beta subunit from Borrelia recurrentis (strain A1).